A 276-amino-acid chain; its full sequence is Zinc transporter ZTP29 (276 aa).

Residues 1 to 6 (MDSQML) are Cytoplasmic-facing. Residues 7 to 27 (VALGLSLVGGLSTSLGALFVV) traverse the membrane as a helical segment. The Lumenal portion of the chain corresponds to 28 to 35 (LSETPNMK). A helical transmembrane segment spans residues 36–56 (MLGLLQGFASGLMLSISFLDL). At 57–63 (AHNAINS) the chain is on the cytoplasmic side. Residues 64–84 (IGFFKANLWFFGGVIFFACIT) traverse the membrane as a helical segment. The Lumenal segment spans residues 85–123 (KFIPEPTLGPSTDGKRRKKNGDEGGKDMMKKHRKQVLYS). The helical transmembrane segment at 124–144 (GLITAIGISLHNFPEGMAVFL) threads the bilayer. The Cytoplasmic portion of the chain corresponds to 145-156 (GSIKGMRVGVNL). A helical transmembrane segment spans residues 157–177 (ALAIALHNIPEGVAVALPIYF). Over 178–187 (ATESKWQAFK) the chain is Lumenal. The chain crosses the membrane as a helical span at residues 188–208 (LATLSGLAEPLGVIIVAYLFP). The Cytoplasmic segment spans residues 209-219 (RSLSPEILEGL). A helical transmembrane segment spans residues 220–240 (LGAVGGIMAFLTLHEMLPLAF). The Lumenal segment spans residues 241-250 (DYAGQKQAVK). Residues 251–271 (AVFFGMACMSASLYFLELSLP) form a helical membrane-spanning segment. Residues 272–276 (ETMSL) lie on the Cytoplasmic side of the membrane.

Belongs to the ZIP transporter (TC 2.A.5) family. ZupT subfamily. Expressed in hypocotyls, cotyledons, leaves and anthers.

Its subcellular location is the endoplasmic reticulum membrane. Zinc transporter involved response to salt stress. May act through the regulation of zinc levels required to induce the unfolded protein response (UPR) pathway. In Arabidopsis thaliana (Mouse-ear cress), this protein is Zinc transporter ZTP29 (ZTP29).